The following is a 470-amino-acid chain: Tryptophan synthase beta chain 1, chloroplastic (470 aa).

Residues 1 to 10 (MAASGTSATF) show a composition bias toward polar residues. Residues 1 to 24 (MAASGTSATFRASVSSAPSSSSQL) form a disordered region. The span at 12 to 22 (ASVSSAPSSSS) shows a compositional bias: low complexity. The residue at position 165 (Lys165) is an N6-(pyridoxal phosphate)lysine.

The protein belongs to the TrpB family. As to quaternary structure, tetramer of two alpha and two beta chains. It depends on pyridoxal 5'-phosphate as a cofactor.

The protein localises to the plastid. It localises to the chloroplast. The enzyme catalyses (1S,2R)-1-C-(indol-3-yl)glycerol 3-phosphate + L-serine = D-glyceraldehyde 3-phosphate + L-tryptophan + H2O. It functions in the pathway amino-acid biosynthesis; L-tryptophan biosynthesis; L-tryptophan from chorismate: step 5/5. Functionally, the beta subunit is responsible for the synthesis of L-tryptophan from indole and L-serine. This is Tryptophan synthase beta chain 1, chloroplastic (TSB1) from Arabidopsis thaliana (Mouse-ear cress).